The sequence spans 276 residues: Sulfur carrier protein FdhD (276 aa).

The active-site Cysteine persulfide intermediate is C120.

It belongs to the FdhD family.

It localises to the cytoplasm. In terms of biological role, required for formate dehydrogenase (FDH) activity. Acts as a sulfur carrier protein that transfers sulfur from IscS to the molybdenum cofactor prior to its insertion into FDH. In Bordetella bronchiseptica (strain ATCC BAA-588 / NCTC 13252 / RB50) (Alcaligenes bronchisepticus), this protein is Sulfur carrier protein FdhD.